Reading from the N-terminus, the 125-residue chain is Putative oxygen-evolving enhancer protein 2-2 (125 aa).

A Phosphoserine modification is found at S15.

The protein belongs to the PsbP family.

This chain is Putative oxygen-evolving enhancer protein 2-2 (PSBP2), found in Arabidopsis thaliana (Mouse-ear cress).